The following is a 282-amino-acid chain: BTB/POZ domain-containing protein At3g56230 (282 aa).

The span at 40–50 (GSKEDRHDKSN) shows a compositional bias: basic and acidic residues. The interval 40–66 (GSKEDRHDKSNHNSTINNGSSISSSPL) is disordered. Over residues 51-64 (HNSTINNGSSISSS) the composition is skewed to low complexity. The region spanning 111–181 (ADILLKPGDD…LYTGTLASDK (71 aa)) is the BTB domain.

The protein operates within protein modification; protein ubiquitination. May act as a substrate-specific adapter of an E3 ubiquitin-protein ligase complex (CUL3-RBX1-BTB) which mediates the ubiquitination and subsequent proteasomal degradation of target proteins. This is BTB/POZ domain-containing protein At3g56230 from Arabidopsis thaliana (Mouse-ear cress).